We begin with the raw amino-acid sequence, 231 residues long: DNA repair protein RecO (231 aa).

It belongs to the RecO family.

Functionally, involved in DNA repair and RecF pathway recombination. The sequence is that of DNA repair protein RecO from Coxiella burnetii (strain CbuK_Q154) (Coxiella burnetii (strain Q154)).